The following is a 388-amino-acid chain: Succinate--CoA ligase [ADP-forming] subunit beta (388 aa).

An ATP-grasp domain is found at 9 to 244 (KQLFADYGLP…PSQEDPREAH (236 aa)). Residues Lys46, 53 to 55 (GRG), Glu99, Thr102, and Glu107 contribute to the ATP site. Positions 199 and 213 each coordinate Mg(2+). Substrate is bound by residues Asn264 and 321–323 (GIV).

The protein belongs to the succinate/malate CoA ligase beta subunit family. In terms of assembly, heterotetramer of two alpha and two beta subunits. Mg(2+) serves as cofactor.

The catalysed reaction is succinate + ATP + CoA = succinyl-CoA + ADP + phosphate. The enzyme catalyses GTP + succinate + CoA = succinyl-CoA + GDP + phosphate. The protein operates within carbohydrate metabolism; tricarboxylic acid cycle; succinate from succinyl-CoA (ligase route): step 1/1. In terms of biological role, succinyl-CoA synthetase functions in the citric acid cycle (TCA), coupling the hydrolysis of succinyl-CoA to the synthesis of either ATP or GTP and thus represents the only step of substrate-level phosphorylation in the TCA. The beta subunit provides nucleotide specificity of the enzyme and binds the substrate succinate, while the binding sites for coenzyme A and phosphate are found in the alpha subunit. The sequence is that of Succinate--CoA ligase [ADP-forming] subunit beta from Hahella chejuensis (strain KCTC 2396).